We begin with the raw amino-acid sequence, 186 residues long: UPF0340 protein SEQ_1951 (186 aa).

It belongs to the UPF0340 family.

The protein is UPF0340 protein SEQ_1951 of Streptococcus equi subsp. equi (strain 4047).